Reading from the N-terminus, the 1318-residue chain is Meiotically up-regulated gene 79 protein (1318 aa).

Disordered regions lie at residues 177-198 (PVNSHPSQSMFGNGVRASSGSY), 208-227 (EEELPSSKKRQRTPPPIVVT), and 360-387 (PQALAAAESPTTKAPTTKAPTSEAPPKG). Low complexity predominate over residues 364–384 (AAAESPTTKAPTTKAPTSEAP). Positions 1049–1158 (MISYKKMVLS…WIHSLNFNAA (110 aa)) constitute a PH domain.

It localises to the nucleus. In terms of biological role, appears to have a role in sporulation. This Schizosaccharomyces pombe (strain 972 / ATCC 24843) (Fission yeast) protein is Meiotically up-regulated gene 79 protein (mug79).